We begin with the raw amino-acid sequence, 610 residues long: Ectonucleoside triphosphate diphosphohydrolase 7 (610 aa).

The Cytoplasmic portion of the chain corresponds to 1–28 (MARISFSCLFPASWHCSLPSVTQFSRQR). The helical transmembrane segment at 29-49 (VALLIISVAVFILVFAAVADL) threads the bilayer. The Vesicular segment spans residues 50 to 555 (QLWSSRAFRD…VSWFRISFVY (506 aa)). Glutamate 217 serves as the catalytic Proton acceptor. Residues asparagine 336 and asparagine 400 are each glycosylated (N-linked (GlcNAc...) asparagine). An intrachain disulfide couples cysteine 454 to cysteine 483. The helical transmembrane segment at 556–576 (NHYLFFACILVVLLSIVLYIL) threads the bilayer. Over 577–610 (RLRRIHRRQARASALDLLLMEEGVHTVLEPGIPT) the chain is Cytoplasmic.

It belongs to the GDA1/CD39 NTPase family. The cofactor is Ca(2+). Mg(2+) serves as cofactor.

The protein resides in the cytoplasmic vesicle membrane. It carries out the reaction a ribonucleoside 5'-triphosphate + H2O = a ribonucleoside 5'-diphosphate + phosphate + H(+). It catalyses the reaction UTP + H2O = UDP + phosphate + H(+). The catalysed reaction is GTP + H2O = GDP + phosphate + H(+). The enzyme catalyses CTP + H2O = CDP + phosphate + H(+). Catalyzes the hydrolysis of nucleoside triphosphates and diphosphates in a calcium- or magnesium-dependent manner. Preferentially hydrolyzes nucleoside 5'-triphosphates, with substrate preference for UTP &gt; GTP &gt; CTP. Hydrolyzes ATP and nucleoside diphosphates only to a minor extent. The protein is Ectonucleoside triphosphate diphosphohydrolase 7 (entpd7) of Xenopus tropicalis (Western clawed frog).